Here is a 347-residue protein sequence, read N- to C-terminus: tRNA(Ile)-lysidine synthase (347 aa).

27 to 32 (SGGADS) is an ATP binding site. Residues 243–263 (AAPASPSHVEGEASAPHDAAH) form a disordered region.

It belongs to the tRNA(Ile)-lysidine synthase family.

It localises to the cytoplasm. The enzyme catalyses cytidine(34) in tRNA(Ile2) + L-lysine + ATP = lysidine(34) in tRNA(Ile2) + AMP + diphosphate + H(+). Its function is as follows. Ligates lysine onto the cytidine present at position 34 of the AUA codon-specific tRNA(Ile) that contains the anticodon CAU, in an ATP-dependent manner. Cytidine is converted to lysidine, thus changing the amino acid specificity of the tRNA from methionine to isoleucine. The protein is tRNA(Ile)-lysidine synthase of Nitratidesulfovibrio vulgaris (strain ATCC 29579 / DSM 644 / CCUG 34227 / NCIMB 8303 / VKM B-1760 / Hildenborough) (Desulfovibrio vulgaris).